Consider the following 194-residue polypeptide: ATP-dependent Clp protease proteolytic subunit 4 (194 aa).

The active-site Nucleophile is the serine 100. Histidine 125 is an active-site residue.

The protein belongs to the peptidase S14 family. In terms of assembly, fourteen ClpP subunits assemble into 2 heptameric rings which stack back to back to give a disk-like structure with a central cavity, resembling the structure of eukaryotic proteasomes.

It is found in the cytoplasm. It catalyses the reaction Hydrolysis of proteins to small peptides in the presence of ATP and magnesium. alpha-casein is the usual test substrate. In the absence of ATP, only oligopeptides shorter than five residues are hydrolyzed (such as succinyl-Leu-Tyr-|-NHMec, and Leu-Tyr-Leu-|-Tyr-Trp, in which cleavage of the -Tyr-|-Leu- and -Tyr-|-Trp bonds also occurs).. In terms of biological role, cleaves peptides in various proteins in a process that requires ATP hydrolysis. Has a chymotrypsin-like activity. Plays a major role in the degradation of misfolded proteins. This chain is ATP-dependent Clp protease proteolytic subunit 4, found in Rhodococcus jostii (strain RHA1).